Consider the following 124-residue polypeptide: ATP synthase epsilon chain (124 aa).

The interval 97 to 124 (ARVREASSEEEKSRAESELRAVKRSKEK) is disordered.

Belongs to the ATPase epsilon chain family. In terms of assembly, F-type ATPases have 2 components, CF(1) - the catalytic core - and CF(0) - the membrane proton channel. CF(1) has five subunits: alpha(3), beta(3), gamma(1), delta(1), epsilon(1). CF(0) has three main subunits: a, b and c.

It is found in the cell membrane. Produces ATP from ADP in the presence of a proton gradient across the membrane. This Corynebacterium urealyticum (strain ATCC 43042 / DSM 7109) protein is ATP synthase epsilon chain.